The primary structure comprises 449 residues: Probable glycine dehydrogenase (decarboxylating) subunit 1 (449 aa).

Belongs to the GcvP family. N-terminal subunit subfamily. As to quaternary structure, the glycine cleavage system is composed of four proteins: P, T, L and H. In this organism, the P 'protein' is a heterodimer of two subunits.

The catalysed reaction is N(6)-[(R)-lipoyl]-L-lysyl-[glycine-cleavage complex H protein] + glycine + H(+) = N(6)-[(R)-S(8)-aminomethyldihydrolipoyl]-L-lysyl-[glycine-cleavage complex H protein] + CO2. The glycine cleavage system catalyzes the degradation of glycine. The P protein binds the alpha-amino group of glycine through its pyridoxal phosphate cofactor; CO(2) is released and the remaining methylamine moiety is then transferred to the lipoamide cofactor of the H protein. This Oceanobacillus iheyensis (strain DSM 14371 / CIP 107618 / JCM 11309 / KCTC 3954 / HTE831) protein is Probable glycine dehydrogenase (decarboxylating) subunit 1.